A 446-amino-acid polypeptide reads, in one-letter code: N-succinylarginine dihydrolase (446 aa).

Residues 19–28, Asn110, and 137–138 contribute to the substrate site; these read AGLSFGNVAS and HR. Glu174 is a catalytic residue. Arg213 lines the substrate pocket. His249 is a catalytic residue. The substrate site is built by Asp251 and Asn364. The Nucleophile role is filled by Cys370.

The protein belongs to the succinylarginine dihydrolase family. Homodimer.

The catalysed reaction is N(2)-succinyl-L-arginine + 2 H2O + 2 H(+) = N(2)-succinyl-L-ornithine + 2 NH4(+) + CO2. It functions in the pathway amino-acid degradation; L-arginine degradation via AST pathway; L-glutamate and succinate from L-arginine: step 2/5. In terms of biological role, catalyzes the hydrolysis of N(2)-succinylarginine into N(2)-succinylornithine, ammonia and CO(2). The protein is N-succinylarginine dihydrolase of Burkholderia multivorans (strain ATCC 17616 / 249).